Reading from the N-terminus, the 120-residue chain is Large ribosomal subunit protein bL17 (120 aa).

It belongs to the bacterial ribosomal protein bL17 family. As to quaternary structure, part of the 50S ribosomal subunit. Contacts protein L32.

In Desulforapulum autotrophicum (strain ATCC 43914 / DSM 3382 / VKM B-1955 / HRM2) (Desulfobacterium autotrophicum), this protein is Large ribosomal subunit protein bL17.